Here is a 143-residue protein sequence, read N- to C-terminus: MLSPKRTKFRKQHCGNLKGISTRGNVICFGKFPLQALEPSWITSRQIEAGRRAITRYARRGGKLWIRIFPDKPITIRPAETRMGSGKGSPEYWVAVVKPGKILYEISGVSENIARAAMKIAAYKMPIRTQFITTSSLNKKQEI.

This sequence belongs to the universal ribosomal protein uL16 family. In terms of assembly, part of the 50S ribosomal subunit.

The protein resides in the plastid. It localises to the chloroplast. This Marchantia polymorpha (Common liverwort) protein is Large ribosomal subunit protein uL16c.